Here is a 62-residue protein sequence, read N- to C-terminus: Toxin Ct28 (62 aa).

A signal peptide spans methionine 1–serine 22. 3 cysteine pairs are disulfide-bonded: cysteine 29–cysteine 51, cysteine 35–cysteine 56, and cysteine 39–cysteine 58. Residue asparagine 61 is modified to Asparagine amide.

This sequence belongs to the short scorpion toxin superfamily. Potassium channel inhibitor family. Alpha-KTx 02 subfamily. In terms of tissue distribution, expressed by the venom gland.

Its subcellular location is the secreted. Functionally, blocks voltage-gated potassium channels. The polypeptide is Toxin Ct28 (Centruroides tecomanus (Scorpion)).